Reading from the N-terminus, the 438-residue chain is Cytochrome P450 monooxygenase claJ (438 aa).

Residue cysteine 378 coordinates heme.

This sequence belongs to the cytochrome P450 family. It depends on heme as a cofactor.

It participates in secondary metabolite biosynthesis. Cytochrome P450 monooxygenase; part of the cla gene cluster that produces clavatol and ortho-quinone methide. The clavatol biosynthesis cluster cla and the terrestric acid cluster tra are both involved in the production of peniphenones and penilactones. The non-reducing PKS claF is responsible for the formation of clavatol from successive condensations of 3 malonyl-CoA units, presumably with a simple acetyl-CoA starter unit, and 2 methylation steps. The esterase claE probably collaborates with claF by catalyzing the hydrolysis of ACP-bound acyl intermediates to free the ACP from stalled intermediates. The clavatol oxidase claD then converts clavatol to hydroxyclavatol. Spontaneous dehydration of hydroxyclavatol leads to the accumulation of the highly active ortho-quinone methide. On the other hand, the PKS-NRPS hybrid traA is involved in the formation of crustosic acid, with the help of traB and traD. The polyketide synthase module (PKS) of traA is responsible for the synthesis of the polyketide backbone via the condensation of an acetyl-CoA starter unit with 3 malonyl-CoA units. The downstream nonribosomal peptide synthetase (NRPS) module then amidates the carboxyl end of the polyketide with L-malic acid. Because traA lacks a designated enoylreductase (ER) domain, the required activity is provided the enoyl reductase traG. Crustosic acid undergoes decarboxylation and isomerization to the terrestric acid, catalyzed by the 2-oxoglutarate-dependent dioxygenase traH. Both acids are further converted to the 2 gamma-butyrolactones (R)-5-methyltetronic acid and (S)-5-carboxylmethyltetronic acid, with involvement of the cytochrome P450 monooxygenase claJ. Spontaneous addition of the methide to these gamma-butyrolactones leads to peniphenone D and penilactone D, which undergo again stereospecific attacking by methide to give penilactones A and B. This Penicillium crustosum (Blue mold fungus) protein is Cytochrome P450 monooxygenase claJ.